The sequence spans 197 residues: Phospholipid hydroperoxide glutathione peroxidase (197 aa).

Residue Ser-40 is modified to Phosphoserine. The active site involves Sec-73. Position 73 (Sec-73) is a non-standard amino acid, selenocysteine.

The protein belongs to the glutathione peroxidase family. In terms of assembly, monomer. Has a tendency to form higher mass oligomers. Interacts with FUNDC1; this interaction promotes GPX4 recruitment into mitochondria through TOM/TIM complex where it is degraded by mitophagy.

The protein localises to the mitochondrion. It localises to the cytoplasm. It catalyses the reaction a hydroperoxy polyunsaturated fatty acid + 2 glutathione = a hydroxy polyunsaturated fatty acid + glutathione disulfide + H2O. The enzyme catalyses 2 glutathione + H2O2 = glutathione disulfide + 2 H2O. It carries out the reaction tert-butyl hydroperoxide + 2 glutathione = tert-butanol + glutathione disulfide + H2O. The catalysed reaction is cumene hydroperoxide + 2 glutathione = 2-phenylpropan-2-ol + glutathione disulfide + H2O. It catalyses the reaction (9S)-hydroperoxy-(10E,12Z)-octadecadienoate + 2 glutathione = (9S)-hydroxy-(10E,12Z)-octadecadienoate + glutathione disulfide + H2O. The enzyme catalyses (13S)-hydroperoxy-(9Z,11E)-octadecadienoate + 2 glutathione = (13S)-hydroxy-(9Z,11E)-octadecadienoate + glutathione disulfide + H2O. It carries out the reaction (5S)-hydroperoxy-(6E,8Z,11Z,14Z)-eicosatetraenoate + 2 glutathione = (5S)-hydroxy-(6E,8Z,11Z,14Z)-eicosatetraenoate + glutathione disulfide + H2O. The catalysed reaction is (12R)-hydroperoxy-(5Z,8Z,10E,14Z)-eicosatetraenoate + 2 glutathione = (12R)-hydroxy-(5Z,8Z,10E,14Z)-eicosatetraenoate + glutathione disulfide + H2O. It catalyses the reaction (12S)-hydroperoxy-(5Z,8Z,10E,14Z)-eicosatetraenoate + 2 glutathione = (12S)-hydroxy-(5Z,8Z,10E,14Z)-eicosatetraenoate + glutathione disulfide + H2O. The enzyme catalyses (15S)-hydroperoxy-(5Z,8Z,11Z,13E)-eicosatetraenoate + 2 glutathione = (15S)-hydroxy-(5Z,8Z,11Z,13E)-eicosatetraenoate + glutathione disulfide + H2O. It carries out the reaction (5S)-hydroperoxy-(6E,8Z,11Z,14Z,17Z)-eicosapentaenoate + 2 glutathione = (5S)-hydroxy-(6E,8Z,11Z,14Z,17Z)-eicosapentaenoate + glutathione disulfide + H2O. The catalysed reaction is (12S)-hydroperoxy-(5Z,8Z,10E,14Z,17Z)-eicosapentaenoate + 2 glutathione = (12S)-hydroxy-(5Z,8Z,10E,14Z,17Z)-eicosapentaenoate + glutathione disulfide + H2O. It catalyses the reaction (15S)-hydroperoxy-(5Z,8Z,11Z,13E,17Z)-eicosapentaenoate + 2 glutathione = (15S)-hydroxy-(5Z,8Z,11Z,13E,17Z)-eicosapentaenoate + glutathione disulfide + H2O. The enzyme catalyses (15S)-hydroperoxy-(11Z,13E)-eicosadienoate + 2 glutathione = (15S)-hydroxy-(11Z,13E)-eicosadienoate + glutathione disulfide + H2O. It carries out the reaction (17S)-hydroperoxy-(4Z,7Z,10Z,13Z,15E,19Z)-docosahexaenoate + 2 glutathione = (17S)-hydroxy-(4Z,7Z,10Z,13Z,15E,19Z)-docosahexaenoate + glutathione disulfide + H2O. The catalysed reaction is a hydroperoxy-1,2-diacyl-glycero-3-phosphocholine + 2 glutathione = a hydroxy-1,2-diacyl-glycero-3-phosphocholine + glutathione disulfide + H2O. Functionally, essential antioxidant peroxidase that directly reduces phospholipid hydroperoxide even if they are incorporated in membranes and lipoproteins. Can also reduce fatty acid hydroperoxide, cholesterol hydroperoxide and thymine hydroperoxide. Plays a key role in protecting cells from oxidative damage by preventing membrane lipid peroxidation. Required to prevent cells from ferroptosis, a non-apoptotic cell death resulting from an iron-dependent accumulation of lipid reactive oxygen species. The presence of selenocysteine (Sec) versus Cys at the active site is essential for life: it provides resistance to overoxidation and prevents cells against ferroptosis. The presence of Sec at the active site is also essential for the survival of a specific type of parvalbumin-positive interneurons, thereby preventing against fatal epileptic seizures. May be required to protect cells from the toxicity of ingested lipid hydroperoxides. Required for normal sperm development and male fertility. Essential for maturation and survival of photoreceptor cells. Plays a role in a primary T-cell response to viral and parasitic infection by protecting T-cells from ferroptosis and by supporting T-cell expansion. Plays a role of glutathione peroxidase in platelets in the arachidonic acid metabolism. Reduces hydroperoxy ester lipids formed by a 15-lipoxygenase that may play a role as down-regulator of the cellular 15-lipoxygenase pathway. Can also reduce small soluble hydroperoxides such as H2O2, cumene hydroperoxide and tert-butyl hydroperoxide. The chain is Phospholipid hydroperoxide glutathione peroxidase from Sus scrofa (Pig).